The sequence spans 83 residues: Conotoxin p21a (83 aa).

Residues Pro-24 and Pro-43 each carry the 4-hydroxyproline; partial modification. A Histidine amide modification is found at His-83.

As to quaternary structure, may form a non-covalent dimer. Contains 5 disulfide bonds. As to expression, expressed by the venom duct.

Its subcellular location is the secreted. The polypeptide is Conotoxin p21a (Conus purpurascens (Purple cone)).